The chain runs to 322 residues: Tetraacyldisaccharide 4'-kinase (322 aa).

54–61 (SVGGTGKT) is an ATP binding site.

This sequence belongs to the LpxK family.

The enzyme catalyses a lipid A disaccharide + ATP = a lipid IVA + ADP + H(+). It participates in glycolipid biosynthesis; lipid IV(A) biosynthesis; lipid IV(A) from (3R)-3-hydroxytetradecanoyl-[acyl-carrier-protein] and UDP-N-acetyl-alpha-D-glucosamine: step 6/6. Functionally, transfers the gamma-phosphate of ATP to the 4'-position of a tetraacyldisaccharide 1-phosphate intermediate (termed DS-1-P) to form tetraacyldisaccharide 1,4'-bis-phosphate (lipid IVA). The polypeptide is Tetraacyldisaccharide 4'-kinase (Francisella philomiragia subsp. philomiragia (strain ATCC 25017 / CCUG 19701 / FSC 153 / O#319-036)).